The following is a 47-amino-acid chain: Conotoxin Bu10 (47 aa).

A propeptide spanning residues 1–22 (DSRGTQLHRALRKATILSVSAR) is cleaved from the precursor. Disulfide bonds link C23-C37, C30-C41, and C36-C46. Position 46 is a cysteine amide (C46).

This sequence belongs to the conotoxin O1 superfamily. In terms of tissue distribution, expressed by the venom duct.

It is found in the secreted. This chain is Conotoxin Bu10, found in Conus bullatus (Bubble cone).